The primary structure comprises 146 residues: Oleosin (146 aa).

An N-acetylalanine modification is found at Ala-2. Helical transmembrane passes span 22-42 (ILGFITLFVSGAILLLLTGLT), 56-76 (VLIFFSPILIPVATVLFVAVA), and 77-97 (GFLSAGGFGLAALSAISWLYN). The Proline-knot motif lies at 55–66 (PVLIFFSPILIP).

This sequence belongs to the oleosin family. In terms of tissue distribution, expressed in pollen (at protein level).

It localises to the lipid droplet. The protein localises to the membrane. In Pinus elliottii (Slash pine), this protein is Oleosin.